The following is a 269-amino-acid chain: MSNVRHHEGSVTIEISNQLSEVLSVIERHSGINVAGRAFVRSAVDGGLKPYSDIDLLVTVAVKLDETTRRALLNDLMEASAFPGESETLRAIEVTLVVHDDIIPWRYPAKRELQFGEWQRNDILAGIFEPAMIDIDLAILLTKAREHSVALVGPAAEEFFDPVPEQDLFEALRETLKLWNSQPDWAGDERNVVLTLSRIWYSAITGKIAPKDVAADWAIKRLPAQYQPVLLEAKQAYLGQKEDHLASRADHLEEFIRFVKGEIIKSVGK.

It carries out the reaction streptomycin + ATP = 3''-O-adenylylstreptomycin + diphosphate. The catalysed reaction is spectinomycin + ATP = 9-O-adenylylspectinomycin + diphosphate. Its function is as follows. Mediates bacterial resistance to the antibiotic spectinomycin and probably also to streptomycin. The protein is Aminoglycoside (3'') (9) adenylyltransferase of Rhizobium radiobacter (Agrobacterium tumefaciens).